The chain runs to 64 residues: Large ribosomal subunit protein bL32 (64 aa).

The segment at 1 to 35 (MAVQKSRVTPSRRGQRRSHDALTAKQLSTDPTSGE) is disordered.

It belongs to the bacterial ribosomal protein bL32 family.

This chain is Large ribosomal subunit protein bL32, found in Xanthomonas axonopodis pv. citri (strain 306).